A 342-amino-acid polypeptide reads, in one-letter code: NADPH-dependent methylglyoxal reductase GRE2 (342 aa).

NADP(+) contacts are provided by residues 7-12 (GANGFI), Arg32, Lys36, 57-58 (DI), Tyr165, Lys169, Val199, and Ser216. The active-site Proton donor is the Lys169. At Ser333 the chain carries Phosphoserine.

It belongs to the NAD(P)-dependent epimerase/dehydratase family. Dihydroflavonol-4-reductase subfamily. As to quaternary structure, monomer. The N-terminus is blocked.

It is found in the cytoplasm. The protein localises to the nucleus. It carries out the reaction (S)-lactaldehyde + NADP(+) = methylglyoxal + NADPH + H(+). The enzyme catalyses 3-methylbutanol + NADP(+) = 3-methylbutanal + NADPH + H(+). The catalysed reaction is 2,5-hexanedione + 2 NADPH + 2 H(+) = (2S,5S)-hexanediol + 2 NADP(+). It catalyses the reaction (S)-3-chloro-1-phenyl-1-propanol + NADP(+) = 3-chloro-1-phenyl-1-propanone + NADPH + H(+). With respect to regulation, activated by glutathione. In terms of biological role, catalyzes the irreversible reduction of the cytotoxic compound methylglyoxal (MG, 2-oxopropanal) to (S)-lactaldehyde as an alternative to detoxification of MG by glyoxalase I GLO1. MG is synthesized via a bypath of glycolysis from dihydroxyacetone phosphate and is believed to play a role in cell cycle regulation and stress adaptation. Also catalyzes the reduction of 3-methylbutanal to 3-methylbutanol. Acts as a suppressor of 3-methylbutanol-induced filamentation by modulating the levels of 3-methylbutanal, the signal to which cells respond by filamentation. Also involved in ergosterol metabolism. In Saccharomyces cerevisiae (strain ATCC 204508 / S288c) (Baker's yeast), this protein is NADPH-dependent methylglyoxal reductase GRE2 (GRE2).